We begin with the raw amino-acid sequence, 750 residues long: Serine/threonine-protein kinase GE16371 (750 aa).

Doublecortin domains follow at residues 159 to 245 and 315 to 398; these read LRIK…VEYN and RIVT…AEDF. One can recognise a Protein kinase domain in the interval 479-737; sequence YTLGKIIGDG…SEDILDHYWT (259 aa). Residues 485-493 and K508 contribute to the ATP site; that span reads IGDGNFAIV. The active-site Proton acceptor is the D600.

It belongs to the protein kinase superfamily. CAMK Ser/Thr protein kinase family. CaMK subfamily.

The catalysed reaction is L-seryl-[protein] + ATP = O-phospho-L-seryl-[protein] + ADP + H(+). It carries out the reaction L-threonyl-[protein] + ATP = O-phospho-L-threonyl-[protein] + ADP + H(+). The polypeptide is Serine/threonine-protein kinase GE16371 (Drosophila yakuba (Fruit fly)).